The primary structure comprises 439 residues: Keratin, type I cytoskeletal 40 (439 aa).

Residues 1 to 89 form a head region; sequence MASDGSPSCC…CEEGSFNSNE (89 aa). The IF rod domain occupies 89–400; that stretch reads EKETMQFLND…GLLEKEDSRL (312 aa). Residues 90–124 are coil 1A; sequence KETMQFLNDRLASYLERVRSLEENNAELECRIREQ. The segment at 125-135 is linker 1; sequence CEPNAPLVCPD. The segment at 136 to 236 is coil 1B; it reads YQRYFDTIEE…HEEEVNLLRE (101 aa). The linker 12 stretch occupies residues 237-252; sequence QLGDRLSVELDTAPTV. The segment at 253 to 396 is coil 2; it reads DLNKVLDEMR…NTYRGLLEKE (144 aa). The segment at 397–439 is tail; sequence DSRLPCNPGSGAPMPNSTCEPCSNSMCEPCSAYVICTVENCCA.

Belongs to the intermediate filament family. In terms of assembly, heterotetramer of two type I and two type II keratins.

In terms of biological role, may play a role in late hair differentiation. This chain is Keratin, type I cytoskeletal 40 (Krt40), found in Mus musculus (Mouse).